The chain runs to 228 residues: Ribulose-phosphate 3-epimerase (228 aa).

Ser-9 provides a ligand contact to substrate. Residues His-34, Asp-36, and His-70 each contribute to the a divalent metal cation site. The active-site Proton acceptor is Asp-36. Substrate-binding positions include His-70, 146–149 (GKGG), 175–177 (DGG), and 197–198 (GT). Asp-175 lines the a divalent metal cation pocket. Asp-175 serves as the catalytic Proton donor.

The protein belongs to the ribulose-phosphate 3-epimerase family. Co(2+) serves as cofactor. The cofactor is Fe(2+). It depends on Mn(2+) as a cofactor. Zn(2+) is required as a cofactor.

It carries out the reaction D-ribulose 5-phosphate = D-xylulose 5-phosphate. It functions in the pathway carbohydrate degradation; pentose phosphate pathway; D-xylulose 5-phosphate from D-ribulose 5-phosphate (non-oxidative stage): step 1/1. Functionally, catalyzes the reversible epimerization of D-ribulose 5-phosphate to D-xylulose 5-phosphate. The sequence is that of Ribulose-phosphate 3-epimerase from Schizosaccharomyces pombe (strain 972 / ATCC 24843) (Fission yeast).